The primary structure comprises 603 residues: Myotubularin (603 aa).

A phosphoserine mark is found at S13 and S18. The GRAM domain maps to 29 to 97 (QDVSETVPRL…GVISRIEKMG (69 aa)). A Myotubularin phosphatase domain is found at 163-538 (GWTVYNPVEE…RHLELWVNYY (376 aa)). Residues N288, N313, and I314 each coordinate a 1,2-diacyl-sn-glycero-3-phospho-(1D-myo-inositol-3,5-bisphosphate). Residues N288, N313, and I314 each coordinate a 1,2-diacyl-sn-glycero-3-phospho-(1D-myo-inositol-3-phosphate). C375 serves as the catalytic Phosphocysteine intermediate. A 1,2-diacyl-sn-glycero-3-phospho-(1D-myo-inositol-3,5-bisphosphate) is bound by residues S376, D377, G378, W379, D380, R381, K417, and R421. Positions 376, 377, 378, 379, 380, and 381 each coordinate a 1,2-diacyl-sn-glycero-3-phospho-(1D-myo-inositol-3-phosphate). Position 421 (R421) interacts with a 1,2-diacyl-sn-glycero-3-phospho-(1D-myo-inositol-3-phosphate). A Phosphothreonine modification is found at T495. At S588 the chain carries Phosphoserine.

It belongs to the protein-tyrosine phosphatase family. Non-receptor class myotubularin subfamily. As to quaternary structure, heterodimer with MTMR12. Interacts with KMT2A/MLL1 (via SET domain). Interacts with DES in skeletal muscle but not in cardiac muscle. Interacts with SPEG. In terms of tissue distribution, widely expressed with highest levels detected in heart and muscle and low levels in brain (at protein level). Expressed in skeletal muscles (at protein level).

The protein localises to the cytoplasm. It localises to the cell membrane. It is found in the cell projection. The protein resides in the filopodium. Its subcellular location is the ruffle. The protein localises to the late endosome. It localises to the myofibril. It is found in the sarcomere. The catalysed reaction is a 1,2-diacyl-sn-glycero-3-phospho-(1D-myo-inositol-3-phosphate) + H2O = a 1,2-diacyl-sn-glycero-3-phospho-(1D-myo-inositol) + phosphate. It carries out the reaction a 1,2-diacyl-sn-glycero-3-phospho-(1D-myo-inositol-3,5-bisphosphate) + H2O = a 1,2-diacyl-sn-glycero-3-phospho-(1D-myo-inositol-5-phosphate) + phosphate. The enzyme catalyses 1,2-dioctanoyl-sn-glycero-3-phospho-(1-D-myo-inositol-3-phosphate) + H2O = 1,2-dioctanoyl-sn-glycero-3-phospho-(1D-myo-inositol) + phosphate. It catalyses the reaction 1,2-dioctanoyl-sn-glycero-3-phospho-(1D-myo-inositol-3,5-bisphosphate) + H2O = 1,2-dioctanoyl-sn-glycero-3-phospho-(1D-myo-inositol-5-phosphate) + phosphate. The catalysed reaction is 1,2-dihexadecanoyl-sn-glycero-3-phospho-(1D-myo-inositol-3,5-phosphate) + H2O = 1,2-dihexadecanoyl-sn-glycero-3-phospho-(1D-myo-inositol-5-phosphate) + phosphate. Its activity is regulated as follows. Allosterically activated by phosphatidylinositol 5-phosphate (PI5P). Lipid phosphatase which dephosphorylates phosphatidylinositol 3-monophosphate (PI3P) and phosphatidylinositol 3,5-bisphosphate (PI(3,5)P2). Has also been shown to dephosphorylate phosphotyrosine- and phosphoserine-containing peptides. Negatively regulates EGFR degradation through regulation of EGFR trafficking from the late endosome to the lysosome. Plays a role in vacuolar formation and morphology. Regulates desmin intermediate filament assembly and architecture. Plays a role in mitochondrial morphology and positioning. Required for skeletal muscle maintenance but not for myogenesis. In skeletal muscles, stabilizes MTMR12 protein levels. The sequence is that of Myotubularin from Mus musculus (Mouse).